Reading from the N-terminus, the 595-residue chain is UvrABC system protein C (595 aa).

The GIY-YIG domain maps to 17-94 (FEPGCYLMKD…IKQYQPRYNI (78 aa)). One can recognise a UVR domain in the interval 199 to 234 (KTIIKNLESRMQAASENLEFEQAKEYRDLIQNIHNL).

Belongs to the UvrC family. Interacts with UvrB in an incision complex.

The protein localises to the cytoplasm. Functionally, the UvrABC repair system catalyzes the recognition and processing of DNA lesions. UvrC both incises the 5' and 3' sides of the lesion. The N-terminal half is responsible for the 3' incision and the C-terminal half is responsible for the 5' incision. The protein is UvrABC system protein C of Staphylococcus carnosus (strain TM300).